The primary structure comprises 575 residues: Methionine--tRNA ligase, mitochondrial (575 aa).

The short motif at 20–32 (PIFYPNAKPHLGH) is the 'HIGH' region element. The 'KMSKS' region motif lies at 341–345 (KMSKS). Residue lysine 344 coordinates ATP.

Belongs to the class-I aminoacyl-tRNA synthetase family.

It localises to the mitochondrion matrix. The catalysed reaction is tRNA(Met) + L-methionine + ATP = L-methionyl-tRNA(Met) + AMP + diphosphate. Catalyzes the attachment of methionine to tRNA(Met) in the mitochondrion. The sequence is that of Methionine--tRNA ligase, mitochondrial (MSM1) from Saccharomyces cerevisiae (strain ATCC 204508 / S288c) (Baker's yeast).